The chain runs to 308 residues: Acetaldehyde dehydrogenase (308 aa).

25 to 28 (TGAI) serves as a coordination point for NAD(+). The active-site Acyl-thioester intermediate is the C139. An NAD(+)-binding site is contributed by N279.

This sequence belongs to the acetaldehyde dehydrogenase family.

It carries out the reaction acetaldehyde + NAD(+) + CoA = acetyl-CoA + NADH + H(+). The sequence is that of Acetaldehyde dehydrogenase from Streptomyces griseus subsp. griseus (strain JCM 4626 / CBS 651.72 / NBRC 13350 / KCC S-0626 / ISP 5235).